The following is a 149-amino-acid chain: MHCPFCAAVDTKVIDSRLVGDGSQVRRRRQCLVCNERFTTFEVAELVMPRVIKSDEVREPFNEDKLRRGMLKALEKRPVSSDDVENAINHIKSQLRATGEREVPTKLVGNLVMDALKKLDKVAYIRFASVYRSFEDIREFGEEIARLQD.

A zinc finger spans residues 3–34 (CPFCAAVDTKVIDSRLVGDGSQVRRRRQCLVC). The ATP-cone domain maps to 49-139 (PRVIKSDEVR…VYRSFEDIRE (91 aa)).

The protein belongs to the NrdR family. Zn(2+) serves as cofactor.

Negatively regulates transcription of bacterial ribonucleotide reductase nrd genes and operons by binding to NrdR-boxes. This Serratia proteamaculans (strain 568) protein is Transcriptional repressor NrdR.